Consider the following 256-residue polypeptide: 3-dehydroquinate dehydratase (256 aa).

Residues serine 19, 38–40, and arginine 68 contribute to the 3-dehydroquinate site; that span reads EIR. Histidine 122 (proton donor/acceptor) is an active-site residue. Catalysis depends on lysine 147, which acts as the Schiff-base intermediate with substrate. The 3-dehydroquinate site is built by arginine 185, threonine 204, and glutamine 208.

This sequence belongs to the type-I 3-dehydroquinase family. Homodimer.

It carries out the reaction 3-dehydroquinate = 3-dehydroshikimate + H2O. It functions in the pathway metabolic intermediate biosynthesis; chorismate biosynthesis; chorismate from D-erythrose 4-phosphate and phosphoenolpyruvate: step 3/7. Involved in the third step of the chorismate pathway, which leads to the biosynthesis of aromatic amino acids. Catalyzes the cis-dehydration of 3-dehydroquinate (DHQ) and introduces the first double bond of the aromatic ring to yield 3-dehydroshikimate. This chain is 3-dehydroquinate dehydratase, found in Methanospirillum hungatei JF-1 (strain ATCC 27890 / DSM 864 / NBRC 100397 / JF-1).